The sequence spans 572 residues: NADH-ubiquinone oxidoreductase chain 5 (572 aa).

16 helical membrane-spanning segments follow: residues 4–24 (ISFV…LYFL), 44–64 (IVMT…VLMI), 86–106 (IMLV…PNLI), 107–127 (SILL…IYFQ), 147–167 (VALL…YIFY), 170–190 (IMQN…AAMT), 217–237 (SSTL…ILST), 239–259 (WLGQ…GLGA), 268–288 (IIAL…SMGF), 294–314 (FHLL…GAII), 337–357 (SACF…AGFY), 372–394 (NMFS…FRLV), 422–442 (MGLL…IFPF), 457–477 (LFVC…NLFF), 490–510 (FLGS…FYPL), and 552–572 (LKIY…LLFL).

This sequence belongs to the complex I subunit 5 family.

The protein localises to the mitochondrion inner membrane. It carries out the reaction a ubiquinone + NADH + 5 H(+)(in) = a ubiquinol + NAD(+) + 4 H(+)(out). Its function is as follows. Core subunit of the mitochondrial membrane respiratory chain NADH dehydrogenase (Complex I) that is believed to belong to the minimal assembly required for catalysis. Complex I functions in the transfer of electrons from NADH to the respiratory chain. The immediate electron acceptor for the enzyme is believed to be ubiquinone. In Drosophila melanogaster (Fruit fly), this protein is NADH-ubiquinone oxidoreductase chain 5 (mt:ND5).